A 304-amino-acid polypeptide reads, in one-letter code: E3 ubiquitin-protein ligase CHIP (304 aa).

Positions 1 to 10 are enriched in basic and acidic residues; it reads MKGKEEKEGG. The segment at 1-30 is disordered; the sequence is MKGKEEKEGGARLGTGGGGSPDKSPSAQEL. Residue K2 forms a Glycyl lysine isopeptide (Lys-Gly) (interchain with G-Cter in ubiquitin) linkage. A compositionally biased stretch (gly residues) spans 11–20; the sequence is ARLGTGGGGS. At S20 the chain carries Phosphoserine. K23 is covalently cross-linked (Glycyl lysine isopeptide (Lys-Gly) (interchain with G-Cter in ubiquitin)). A phosphoserine mark is found at S24 and S26. TPR repeat units lie at residues 27 to 60, 61 to 94, and 96 to 128; these read AQELKEQGNRLFVGRKYPEAAACYGRAITRNPLV, AVYYTNRALCYLKMQQPEQALADCRRALELDGQS, and KAHFFLGQCQLEMESYDEAIANLQRAYSLAKEQ. The required for interaction with MAPK7 stretch occupies residues 102 to 201; sequence GQCQLEMESY…GHIRAQQACI (100 aa). The tract at residues 143–197 is required for interaction with and ubiquitination of MYOCD; the sequence is AKKKRWNSIEERRIHQESELHSYLTRLIAAERERELEECQRNHEGHEDDGHIRAQ. Positions 144–198 are required for interaction with FOXO1; it reads KKKRWNSIEERRIHQESELHSYLTRLIAAERERELEECQRNHEGHEDDGHIRAQQ. Residues 144–304 form a required for ubiquitination of FOXO1 region; sequence KKKRWNSIEE…ISENGWVEDY (161 aa). Position 150 is a phosphoserine (S150). Residues K222 and K256 each participate in a glycyl lysine isopeptide (Lys-Gly) (interchain with G-Cter in ubiquitin) cross-link. The region spanning 227-301 is the U-box domain; the sequence is DIPDYLCGKI…DAFISENGWV (75 aa). Phosphoserine is present on S274.

Homodimer. Interacts with BAG2, and with the E2 ubiquitin conjugating enzymes UBE2D1, UBE2D2 and UBE2D3. Detected in a ternary complex containing STUB1, HSPA1A and HSPBP1. Part of a complex composed of STUB1/CHIP, VCP/p97, CHRNA3, and UBXN2A that modulates the ubiquitination and endoplasmic reticulum-associated degradation (ERAD) of CHRNA3. Within the complex UBXN2A acts as a scaffold protein required for the interaction of CHRNA3 with VCP/p97, this interaction also inhibits CHRNA3 ubiquitination by STUB1/CHIP and subsequently ERAD. Interacts with MKKS. Interacts with DNAAF4. Interacts (via the U-box domain) with the UBE2V2-UBE2N heterodimer; the complex has a specific 'Lys-63'-linked polyubiquitination activity. Interacts (when monoubiquitinated) with ATXN3. Interacts with UBE2W. Interacts with DNAJB6. Interacts with FLCN and HSP90AA1. Interacts with HSP90. Interacts with UBE2N and UBE2V1. Interacts (via TPR repeats) with HSPA8 (via C-terminus). Interacts (via TPR repeats) with HSPA1A (via C-terminus). Interacts with the non-acetylated form of HSPA1A and HSPA1B. Interacts with SMAD3 and HSP90AB1. Interacts with UBE4B. Interacts with PRMT5. Interacts with MYOCD (via C-terminus). Interacts with FOXO1 (when phosphorylated on 'Ser-253'). Interacts with MAPK7/ERK5; the interaction is enhanced in the presence of IGF1 or MAP2K5 and promotes STUB1/CHIP E3 ligase activity. Interacts with and ubiquitinates ESR1; the interaction is promoted in the absence of estradiol (17-beta-estradiol/E2). Interacts with ESR2. Interacts with and ubiquitinates NFATC3; HSPA1A/HSP70 is required as a co-chaperone. In macrophages, interacts with PAQR3; the interaction promotes PPARG poylubiquitination and STUB1-mediated degradation. Component of the chaperone-assisted selective autophagy (CASA) complex consisting of BAG3, HSPA8/HSC70, HSPB8 and STUB1/CHIP. In terms of processing, auto-ubiquitinated; mediated by UBE2D1 and UBE2D2 and enhanced in the presence of MAP2K5. Monoubiquitinated at Lys-2 following cell stress by UBE2W, promoting the interaction with ATXN3. In terms of tissue distribution, expressed in the brain.

Its subcellular location is the cytoplasm. It is found in the nucleus. The protein localises to the mitochondrion. It carries out the reaction S-ubiquitinyl-[E2 ubiquitin-conjugating enzyme]-L-cysteine + [acceptor protein]-L-lysine = [E2 ubiquitin-conjugating enzyme]-L-cysteine + N(6)-ubiquitinyl-[acceptor protein]-L-lysine.. It functions in the pathway protein modification; protein ubiquitination. Its function is as follows. E3 ubiquitin-protein ligase which targets misfolded chaperone substrates towards proteasomal degradation. Plays a role in the maintenance of mitochondrial morphology and promotes mitophagic removal of dysfunctional mitochondria; thereby acts as a protector against apoptosis in response to cellular stress. Negatively regulates vascular smooth muscle contraction, via degradation of the transcriptional activator MYOCD and subsequent loss of transcription of genes involved in vascular smooth muscle contraction. Promotes survival and proliferation of cardiac smooth muscle cells via ubiquitination and degradation of FOXO1, resulting in subsequent repression of FOXO1-mediated transcription of pro-apoptotic genes. Ubiquitinates ICER-type isoforms of CREM and targets them for proteasomal degradation, thereby acts as a positive effector of MAPK/ERK-mediated inhibition of apoptosis in cardiomyocytes. Inhibits lipopolysaccharide-induced apoptosis and hypertrophy in cardiomyocytes, via ubiquitination and subsequent proteasomal degradation of NFATC3. Collaborates with ATXN3 in the degradation of misfolded chaperone substrates: ATXN3 restricting the length of ubiquitin chain attached to STUB1/CHIP substrates and preventing further chain extension. Ubiquitinates NOS1 in concert with Hsp70 and Hsp40. Modulates the activity of several chaperone complexes, including Hsp70, Hsc70 and Hsp90. Ubiquitinates CHRNA3 targeting it for endoplasmic reticulum-associated degradation in cortical neurons, as part of the STUB1-VCP-UBXN2A complex. Ubiquitinates and promotes ESR1 proteasomal degradation in response to age-related circulating estradiol (17-beta-estradiol/E2) decline, thereby promotes neuronal apoptosis in response to ischemic reperfusion injury. Mediates transfer of non-canonical short ubiquitin chains to HSPA8 that have no effect on HSPA8 degradation. Mediates polyubiquitination of DNA polymerase beta (POLB) at 'Lys-41', 'Lys-61' and 'Lys-81', thereby playing a role in base-excision repair: catalyzes polyubiquitination by amplifying the HUWE1/ARF-BP1-dependent monoubiquitination and leading to POLB-degradation by the proteasome. Mediates polyubiquitination of CYP3A4. Ubiquitinates EPHA2 and may regulate the receptor stability and activity through proteasomal degradation. Acts as a co-chaperone for HSPA1A and HSPA1B chaperone proteins and promotes ubiquitin-mediated protein degradation. Negatively regulates the suppressive function of regulatory T-cells (Treg) during inflammation by mediating the ubiquitination and degradation of FOXP3 in a HSPA1A/B-dependent manner. Catalyzes monoubiquitination of SIRT6, preventing its degradation by the proteasome. Likely mediates polyubiquitination and down-regulates plasma membrane expression of PD-L1/CD274, an immune inhibitory ligand critical for immune tolerance to self and antitumor immunity. Negatively regulates TGF-beta signaling by modulating the basal level of SMAD3 via ubiquitin-mediated degradation. Plays a role in the degradation of TP53. Mediates ubiquitination of RIPK3 leading to its subsequent proteasome-dependent degradation. May regulate myosin assembly in striated muscles together with UBE4B and VCP/p97 by targeting myosin chaperone UNC45B for proteasomal degradation. Ubiquitinates PPARG in macrophages playing a role in M2 macrophages polarization and angiogenesis. The protein is E3 ubiquitin-protein ligase CHIP of Mus musculus (Mouse).